We begin with the raw amino-acid sequence, 206 residues long: Small ribosomal subunit protein uS4 (206 aa).

An S4 RNA-binding domain is found at Cys96–Val156.

The protein belongs to the universal ribosomal protein uS4 family. As to quaternary structure, part of the 30S ribosomal subunit. Contacts protein S5. The interaction surface between S4 and S5 is involved in control of translational fidelity.

Functionally, one of the primary rRNA binding proteins, it binds directly to 16S rRNA where it nucleates assembly of the body of the 30S subunit. With S5 and S12 plays an important role in translational accuracy. This Pseudomonas fluorescens (strain Pf0-1) protein is Small ribosomal subunit protein uS4.